A 265-amino-acid chain; its full sequence is Putative hydro-lyase PST_2764 (265 aa).

This sequence belongs to the D-glutamate cyclase family.

The polypeptide is Putative hydro-lyase PST_2764 (Stutzerimonas stutzeri (strain A1501) (Pseudomonas stutzeri)).